A 280-amino-acid chain; its full sequence is Eukaryotic translation initiation factor 3 subunit F-1 (280 aa).

The region spanning 8–138 is the MPN domain; that stretch reads VRVHPVVLFQ…LRAYICIQLG (131 aa).

Belongs to the eIF-3 subunit F family. In terms of assembly, component of the eukaryotic translation initiation factor 3 (eIF-3) complex. The eIF-3 complex interacts with pix.

The protein resides in the cytoplasm. Functionally, component of the eukaryotic translation initiation factor 3 (eIF-3) complex, which is involved in protein synthesis of a specialized repertoire of mRNAs and, together with other initiation factors, stimulates binding of mRNA and methionyl-tRNAi to the 40S ribosome. The eIF-3 complex specifically targets and initiates translation of a subset of mRNAs involved in cell proliferation. The protein is Eukaryotic translation initiation factor 3 subunit F-1 of Drosophila mojavensis (Fruit fly).